The chain runs to 273 residues: 2,3,4,5-tetrahydropyridine-2,6-dicarboxylate N-succinyltransferase (273 aa).

The substrate site is built by R106 and D143.

The protein belongs to the transferase hexapeptide repeat family. As to quaternary structure, homotrimer.

The protein resides in the cytoplasm. It carries out the reaction (S)-2,3,4,5-tetrahydrodipicolinate + succinyl-CoA + H2O = (S)-2-succinylamino-6-oxoheptanedioate + CoA. Its pathway is amino-acid biosynthesis; L-lysine biosynthesis via DAP pathway; LL-2,6-diaminopimelate from (S)-tetrahydrodipicolinate (succinylase route): step 1/3. The polypeptide is 2,3,4,5-tetrahydropyridine-2,6-dicarboxylate N-succinyltransferase (Wolbachia pipientis wMel).